Consider the following 363-residue polypeptide: Aminomethyltransferase (363 aa).

Belongs to the GcvT family. In terms of assembly, the glycine cleavage system is composed of four proteins: P, T, L and H.

It carries out the reaction N(6)-[(R)-S(8)-aminomethyldihydrolipoyl]-L-lysyl-[protein] + (6S)-5,6,7,8-tetrahydrofolate = N(6)-[(R)-dihydrolipoyl]-L-lysyl-[protein] + (6R)-5,10-methylene-5,6,7,8-tetrahydrofolate + NH4(+). Its function is as follows. The glycine cleavage system catalyzes the degradation of glycine. The chain is Aminomethyltransferase from Dechloromonas aromatica (strain RCB).